The following is a 454-amino-acid chain: Guanine deaminase (454 aa).

Histidine 82 and histidine 84 together coordinate Zn(2+). Residues 84-87, 213-214, 240-243, and aspartate 330 contribute to the substrate site; these read HASQ, RF, and HISE. 2 residues coordinate Zn(2+): histidine 240 and aspartate 330. Serine 453 carries the post-translational modification Phosphoserine.

Belongs to the metallo-dependent hydrolases superfamily. ATZ/TRZ family. Homodimer. Zn(2+) serves as cofactor.

The enzyme catalyses guanine + H2O + H(+) = xanthine + NH4(+). It functions in the pathway purine metabolism; guanine degradation; xanthine from guanine: step 1/1. Its function is as follows. Catalyzes the hydrolytic deamination of guanine, producing xanthine and ammonia. The sequence is that of Guanine deaminase (GDA) from Pongo abelii (Sumatran orangutan).